We begin with the raw amino-acid sequence, 891 residues long: MMLLNMNLQELKQKYNYDVATKMMQQYLDIKFAHLDCLLLFRMGDFYEMFYEDAILASNVLGIALTKRGKNGEEEIAMCGVPYHALENYLTKLIEENYKVAICDQLETPEEAKNRGGYKAVVTRDVTRIITPGTIIEENLIASAEPNYLASLVIPKNKETASLCYVDLSTSEIVVVNVPETEILNELARLKPREILLSENLRSSNLADSIFKQLNFRITYQVDSFFAINKCEKIILDFYKMKDIKGIGEISSSQICAIGSVLEYLSLTQKQNIPHLPIPRIINFHSYMTIDFSTRRNLEIVTNSQGGSQGSLLSTLNHTVTKQGGRLLYNFLSSPLTNIAKINHRLNITEFFYSNLEIVKKIRELLKKTSDIERCLTRITMNRSSGRDLLSIKYTLETATIIKGVFCDAYGVNLPDFIEKIIKPLSGDAELYNLIDETIREDAPNNLNDGGIIKHEYHPKVAQLHDLINNGKLHIDKLKDQYRKETGIDSLKISHNNVIGLFIDITAKNVNKILDPKFIHRQTTVNHVRYTTAELQKLESELVNAKTLVISLEKALYADICSQVIEKASYLRMLASSLNGLDVFCNFAYIADEYDYVKPEFTDALSFDIVKGRHPVVEKALQRESKSFVYNDCHLSELERIWLITGPNMAGKSTFLRQNAIIAIIAQIGSFVPAKSAKIGVVDKIFSRIGAADDLIKGQSTFMAEMLETSAILAQSTKNSLIILDEVGRGTSTYDGVSIAWSVLEYIHDKLKCRCLFATHYHELTVMSNFLPALQNYTIAIEESGKDILFLHNIISGAADRSYGLHVAALAGLPASVINRAKQILLKFEKTSTGKGKNILSMESNNLSLFNLEPNKTTISSKLDEKFSTIDPDKLSPKEALELIYELKKWV.

Residue 646-653 (GPNMAGKS) coordinates ATP.

It belongs to the DNA mismatch repair MutS family.

This protein is involved in the repair of mismatches in DNA. It is possible that it carries out the mismatch recognition step. This protein has a weak ATPase activity. The chain is DNA mismatch repair protein MutS from Rickettsia massiliae (strain Mtu5).